The primary structure comprises 167 residues: Putative peroxiredoxin-B (167 aa).

The Thioredoxin domain maps to 4-167; that stretch reads IKRGDRFPTT…STAQKIIAKL (164 aa). Cys-53 acts as the Cysteine sulfenic acid (-SOH) intermediate in catalysis. The Microbody targeting signal motif lies at 165 to 167; that stretch reads AKL.

Belongs to the peroxiredoxin family. Prx5 subfamily.

It is found in the peroxisome membrane. The catalysed reaction is a hydroperoxide + [thioredoxin]-dithiol = an alcohol + [thioredoxin]-disulfide + H2O. Thiol-specific peroxidase that catalyzes the reduction of hydrogen peroxide and organic hydroperoxides to water and alcohols, respectively. Plays a role in cell protection against oxidative stress by detoxifying peroxides and as sensor of hydrogen peroxide-mediated signaling events. The sequence is that of Putative peroxiredoxin-B (PMPB) from Candida boidinii (Yeast).